A 103-amino-acid polypeptide reads, in one-letter code: Large ribosomal subunit protein bL21 (103 aa).

Belongs to the bacterial ribosomal protein bL21 family. In terms of assembly, part of the 50S ribosomal subunit. Contacts protein L20.

This protein binds to 23S rRNA in the presence of protein L20. The polypeptide is Large ribosomal subunit protein bL21 (Actinobacillus pleuropneumoniae serotype 5b (strain L20)).